Reading from the N-terminus, the 279-residue chain is MKENEKVIMEKGIHTDFKENMTYGEYLQLDSLLSSQKRLSDHHDEMLFIVIHQASELWMKLILHELNAAIESIKQDKLQPAFKMLARVSKIQSQIIQSWDILATLTPSEYIEFRDSLGQASGFQSYQYRMIEYALGYKTPHALKIYEKDPELHARLHTALHAPSLYNVAIQALVKEGFPIHKDVLNRDITQPYEEDATVEAAWLEVYADVKKYWNLYQLAEKLIDIEDWLQQWRFRHMKTVERIIGHKMGTGGSSGVSYLKRVLDQRFFPELWNVRTKL.

Substrate contacts are provided by residues 48–52 (FIVIH), tyrosine 110, and arginine 114. Residue histidine 237 coordinates heme. Residue threonine 251 participates in substrate binding.

The protein belongs to the tryptophan 2,3-dioxygenase family. In terms of assembly, homotetramer. Requires heme as cofactor.

The catalysed reaction is L-tryptophan + O2 = N-formyl-L-kynurenine. It functions in the pathway amino-acid degradation; L-tryptophan degradation via kynurenine pathway; L-kynurenine from L-tryptophan: step 1/2. Functionally, heme-dependent dioxygenase that catalyzes the oxidative cleavage of the L-tryptophan (L-Trp) pyrrole ring and converts L-tryptophan to N-formyl-L-kynurenine. Catalyzes the oxidative cleavage of the indole moiety. The sequence is that of Tryptophan 2,3-dioxygenase from Bacillus anthracis.